The primary structure comprises 899 residues: MLKAVLETTIGSKSKRDLKDYLPTLRNINKLERWALLLADEDFSKETEKLKDELKSGNSLENILERAFTLSREAARRRLKERPYDVQIIAGLALHKGKIIEMKTGEGKTLSSVQAAYLNSLTGDGVIIVTVNDYLAERDSNWMKPVFDLLGVSVGVVLSNMDYELRKAQYAKDITYVTNNELGFDYLRDNMRYDLNEKSLRKFNYCIIDEIDSILIDEARTPLIISGPTEGNTNAYLEVNSLVSFLKECSKDPKTGDYPLEIDDLDGDYTVDEKAKRISFTAKGLNNLEQLLVSKGIISGSMYTDSNFNYVHYMTQALKAHLLFLKNREYIVGDSGVEIVDEFTGRVLTGRRYSDGLHQAIEAKEGVRVANENKTMATITFQNLFRMFDKISGMTGTADTEAKEFHKIYNLDVVVVPTNRLLARIDEDDTIYYTEEFKFNAITDEVYKTYKKGQPVLVGTVSIEKSEILSAMFKNRGIKHEVLNAKNHSREAFIIAEAGAKHAVTIATNMAGRGTDIKLGGNIEHRVRKKIGTNVSLEEFQEAVKNERENYLKDYNEVKSLGGLYVIGSERHESRRIDNQLRGRSGRQGDPGRSRFYVSLEDDLMRLFAGDNLRSLMGKLGMATGEPITHSLLTKSLINAQKRVEDRNFEIRKHLLEYDDVITKQRDFIYAQRNSILEDTAIKDRILVALEEYLSFLLEGTKSSTVSNVFLNEVNSIFAYMLESLGSIENISSLDLKAKLMQIAKANLDEKENLIGRDLFNGFLRYEYLKNIDFKFQEHLANLDSLREAVYLRSYANKNPITEYKEEGFSIFSELIKDIKVSTIRRVLQLKLDSNSSDFKSTKKSRNVKPIHKELSGIVINENKSASNVQVVRSSPKIGRNEPCYCGSGKKYKNCHGKS.

ATP contacts are provided by residues Gln-87, Gly-105–Thr-109, and Asp-516. Zn(2+) is bound by residues Cys-884, Cys-886, Cys-895, and His-896.

Belongs to the SecA family. As to quaternary structure, monomer and homodimer. Part of the essential Sec protein translocation apparatus which comprises SecA, SecYEG and auxiliary proteins SecDF. Other proteins may also be involved. Zn(2+) serves as cofactor.

The protein localises to the cell inner membrane. The protein resides in the cytoplasm. The enzyme catalyses ATP + H2O + cellular proteinSide 1 = ADP + phosphate + cellular proteinSide 2.. Part of the Sec protein translocase complex. Interacts with the SecYEG preprotein conducting channel. Has a central role in coupling the hydrolysis of ATP to the transfer of proteins into and across the cell membrane, serving as an ATP-driven molecular motor driving the stepwise translocation of polypeptide chains across the membrane. The polypeptide is Protein translocase subunit SecA (Borreliella burgdorferi (strain ATCC 35210 / DSM 4680 / CIP 102532 / B31) (Borrelia burgdorferi)).